A 335-amino-acid chain; its full sequence is Tetraacyldisaccharide 4'-kinase (335 aa).

Residue 58-65 (TVGGSGKT) coordinates ATP.

It belongs to the LpxK family.

The catalysed reaction is a lipid A disaccharide + ATP = a lipid IVA + ADP + H(+). Its pathway is glycolipid biosynthesis; lipid IV(A) biosynthesis; lipid IV(A) from (3R)-3-hydroxytetradecanoyl-[acyl-carrier-protein] and UDP-N-acetyl-alpha-D-glucosamine: step 6/6. Transfers the gamma-phosphate of ATP to the 4'-position of a tetraacyldisaccharide 1-phosphate intermediate (termed DS-1-P) to form tetraacyldisaccharide 1,4'-bis-phosphate (lipid IVA). This chain is Tetraacyldisaccharide 4'-kinase, found in Shewanella sp. (strain MR-7).